We begin with the raw amino-acid sequence, 415 residues long: Cell division control protein 11 (415 aa).

Ser-2 carries the post-translational modification N-acetylserine. Residue Ser-2 is modified to Phosphoserine. Positions Arg-12 to Arg-19 match the Basic motif motif. Residues Arg-19–Gly-298 enclose the Septin-type G domain. Residues Gly-29 to Ser-36 form a G1 motif region. GTP is bound by residues Gly-29–Ser-36, Gly-92, Lys-172–Glu-180, Gly-230, and Arg-247. The tract at residues Asp-89–Gly-92 is G3 motif. The tract at residues Ser-171–Asp-174 is G4 motif. At Ser-305 the chain carries Phosphoserine. A disordered region spans residues Arg-307–Met-360. The segment covering Ser-316–Asn-328 has biased composition (low complexity). Thr-327 bears the Phosphothreonine mark. Polar residues-rich tracts occupy residues Pro-329–Val-340 and His-348–Tyr-359. The stretch at Glu-354–Glu-414 forms a coiled coil. Residue Lys-412 forms a Glycyl lysine isopeptide (Lys-Gly) (interchain with G-Cter in SUMO) linkage.

It belongs to the TRAFAC class TrmE-Era-EngA-EngB-Septin-like GTPase superfamily. Septin GTPase family. In terms of assembly, component of the septin complex which consists of CDC3, CDC10, CDC11, CDC12 and probably SHS1 and rearranges to a cortical collar of highly ordered filaments at the mother-bud-neck. A complex formed by CDC3, CDC10, CDC11 and CDC12 is capable of forming long filaments in vitro and the components seem to be present in a 2:2:2:2 arrangement in vivo. The filaments are proposed to be formed by the end-to-end polymerization of CDC3-CDC12-CDC11 complexes with CDC10 serving as a bridge to bundle the polymers into paired filaments. Component of the GIN4 complex composed of at least BNI5, CDC3, CDC10, CDC11, CDC12, GIN4, NAP1 and SHS1. Self-associates. Interacts with BEM4, KCC4, SPR28 and SYP1. Interacts with BNI5. Post-translationally, sumoylated during mitosis on the mother cell side of the bud neck. Sumoylation probably plays a central role in regulating septin ring disassembly during the cell cycle.

Its subcellular location is the membrane. The protein localises to the bud neck. Functionally, septins are GTPases involved in cytokinesis that assemble early in the cell cycle as a patch at the incipient bud site and form a ring approximate 15 minutes before bud emergence, which transforms into an hour-glass shaped collar of cortical filaments that spans both sides of the mother-bud neck. This collar persists until just before cytokinesis, when it splits into two rings that occupy opposite sides of the neck. The septins at the bud neck serve as a structural scaffold that recruits different components involved in diverse processes at specific stages during the cell cycle. Many proteins bind asymmetrically to the septin collar. The septin assembly is regulated by protein kinases GIN4 and/or CLA4. May act by recruiting MYO1 and HOF1, a protein involved in septation, to the site of cleavage. Septins are also involved in cell morphogenesis, bud site selection, chitin deposition, cell cycle regulation, cell compartmentalization and spore wall formation. CDCd11 with SHS1 11 are involved in the recruitment of BNI5 and thereby ensure efficient localization at the bud neck of MYO1, the type II myosin of the actomyosin contractile ring. The sequence is that of Cell division control protein 11 from Saccharomyces cerevisiae (strain ATCC 204508 / S288c) (Baker's yeast).